Here is a 332-residue protein sequence, read N- to C-terminus: 4-hydroxy-3-methylbut-2-enyl diphosphate reductase (332 aa).

Cysteine 13 is a binding site for [4Fe-4S] cluster. 2 residues coordinate (2E)-4-hydroxy-3-methylbut-2-enyl diphosphate: histidine 41 and histidine 75. Dimethylallyl diphosphate contacts are provided by histidine 41 and histidine 75. Isopentenyl diphosphate is bound by residues histidine 41 and histidine 75. [4Fe-4S] cluster is bound at residue cysteine 97. Histidine 125 contributes to the (2E)-4-hydroxy-3-methylbut-2-enyl diphosphate binding site. Histidine 125 serves as a coordination point for dimethylallyl diphosphate. Residue histidine 125 participates in isopentenyl diphosphate binding. Glutamate 127 (proton donor) is an active-site residue. Threonine 168 provides a ligand contact to (2E)-4-hydroxy-3-methylbut-2-enyl diphosphate. Cysteine 229 is a [4Fe-4S] cluster binding site. The (2E)-4-hydroxy-3-methylbut-2-enyl diphosphate site is built by serine 257, serine 258, asparagine 259, and serine 306. Residues serine 257, serine 258, asparagine 259, and serine 306 each contribute to the dimethylallyl diphosphate site. Residues serine 257, serine 258, asparagine 259, and serine 306 each coordinate isopentenyl diphosphate.

This sequence belongs to the IspH family. [4Fe-4S] cluster is required as a cofactor.

It catalyses the reaction isopentenyl diphosphate + 2 oxidized [2Fe-2S]-[ferredoxin] + H2O = (2E)-4-hydroxy-3-methylbut-2-enyl diphosphate + 2 reduced [2Fe-2S]-[ferredoxin] + 2 H(+). It carries out the reaction dimethylallyl diphosphate + 2 oxidized [2Fe-2S]-[ferredoxin] + H2O = (2E)-4-hydroxy-3-methylbut-2-enyl diphosphate + 2 reduced [2Fe-2S]-[ferredoxin] + 2 H(+). The protein operates within isoprenoid biosynthesis; dimethylallyl diphosphate biosynthesis; dimethylallyl diphosphate from (2E)-4-hydroxy-3-methylbutenyl diphosphate: step 1/1. It participates in isoprenoid biosynthesis; isopentenyl diphosphate biosynthesis via DXP pathway; isopentenyl diphosphate from 1-deoxy-D-xylulose 5-phosphate: step 6/6. In terms of biological role, catalyzes the conversion of 1-hydroxy-2-methyl-2-(E)-butenyl 4-diphosphate (HMBPP) into a mixture of isopentenyl diphosphate (IPP) and dimethylallyl diphosphate (DMAPP). Acts in the terminal step of the DOXP/MEP pathway for isoprenoid precursor biosynthesis. The chain is 4-hydroxy-3-methylbut-2-enyl diphosphate reductase from Chlorobaculum parvum (strain DSM 263 / NCIMB 8327) (Chlorobium vibrioforme subsp. thiosulfatophilum).